A 418-amino-acid chain; its full sequence is Putative ion-transport protein YfeO (418 aa).

12 consecutive transmembrane segments (helical) span residues 10-30 (LLLSLPAVAIGIASSLILIMV), 54-74 (DSPLWIIGVLTLTGIAVGLVI), 99-119 (ALPGLIVALILGLAGGVSLGP), 120-140 (EHPIMTVNIALAVAIGARLLP), 149-169 (ILASAGTIGALFGTPVAAALI), 186-206 (LFAPLMAAAAGALTTGLFFHP), 223-243 (ILSGAIVAAIAIAAGMVAVWC), 258-278 (VFVLGIGGLILGILGVIGGPV), 300-320 (DYFLLAVIKLAALVVAAASGF), 322-342 (GGRIFPAVFVGVALGLMLHEH), 343-363 (VPAVPAAITVSCAILGIVLVV), and 371-391 (LFMAAVVVPNTTLLPLLCIVM).

It belongs to the chloride channel (TC 2.A.49) family.

It localises to the cell membrane. In Escherichia coli O45:K1 (strain S88 / ExPEC), this protein is Putative ion-transport protein YfeO.